The chain runs to 509 residues: DEAD-box ATP-dependent RNA helicase CshA (509 aa).

Residues 2–30 (QNFKELGISDKTVQTLEAMGFKEPTPIQK) carry the Q motif motif. Residues 33–203 (IPYALEGDDI…QQFMKAPKII (171 aa)) form the Helicase ATP-binding domain. 46-53 (AQTGTGKT) contacts ATP. A DEAD box motif is present at residues 150–153 (DEAD). The region spanning 214 to 375 (QIDEYYTIVK…LRPPHRKEVL (162 aa)) is the Helicase C-terminal domain. 2 stretches are compositionally biased toward basic residues: residues 440–459 (ARKN…KRGN) and 467–482 (RRSK…KKNQ). Positions 440-509 (ARKNRSSKGG…KGRTFADHQK (70 aa)) are disordered. Basic and acidic residues predominate over residues 483-492 (KKFDRRDKQQ).

It belongs to the DEAD box helicase family. CshA subfamily. Oligomerizes, may be a member of the RNA degradosome.

The protein localises to the cytoplasm. It catalyses the reaction ATP + H2O = ADP + phosphate + H(+). DEAD-box RNA helicase possibly involved in RNA degradation. Unwinds dsRNA in both 5'- and 3'-directions, has RNA-dependent ATPase activity. This Staphylococcus epidermidis (strain ATCC 12228 / FDA PCI 1200) protein is DEAD-box ATP-dependent RNA helicase CshA.